Reading from the N-terminus, the 306-residue chain is Putative syntaxin-131 (306 aa).

Met1 is subject to N-acetylmethionine. The Cytoplasmic portion of the chain corresponds to 1–276 (MNDLLKGSLE…AVKSQKSSRK (276 aa)). Residues 11-23 (FSRDRSNRSDIES) show a composition bias toward basic and acidic residues. Residues 11–35 (FSRDRSNRSDIESGHGPGNSGDLGL) form a disordered region. Coiled-coil stretches lie at residues 35–72 (LSGF…VTKA) and 134–162 (KKKF…VERR). One can recognise a t-SNARE coiled-coil homology domain in the interval 205–267 (LAEIQERHDA…QSGNNQLTKA (63 aa)). Residues 277–297 (WMCIAILILLIIIIITVISVL) traverse the membrane as a helical; Anchor for type IV membrane protein segment. Over 298–306 (KPWTQKNGA) the chain is Vesicular.

Belongs to the syntaxin family. Part of the t-SNARE complex.

It is found in the membrane. Functionally, vesicle trafficking protein that functions in the secretory pathway. The sequence is that of Putative syntaxin-131 (SYP131) from Arabidopsis thaliana (Mouse-ear cress).